Reading from the N-terminus, the 209-residue chain is GTP-binding nuclear protein Ran1B (209 aa).

The Small GTPase Ran-type domain maps to 1–162; that stretch reads NFKLVIVGDG…LYLARKLAGD (162 aa). 9–16 is a binding site for GTP; sequence DGGTGKTT. The switch-I stretch occupies residues 28–36; the sequence is KKYEPTIGV. Residues glycine 59, 113–116, and 141–143 contribute to the GTP site; these read NKVD and SAK. The segment at 59–75 is switch-II; that stretch reads GQEKFGGLRDGYYIHGQ. Low complexity predominate over residues 187–200; that stretch reads QHEAELAAAASQPL. The interval 187–209 is disordered; it reads QHEAELAAAASQPLPDDDDDAFD.

It belongs to the small GTPase superfamily. Ran family. Found in a nuclear export complex with RanGTP, exportin and pre-miRNA.

The protein resides in the nucleus. Its function is as follows. GTP-binding protein involved in nucleocytoplasmic transport. Required for the import of protein into the nucleus and also for RNA export. Involved in chromatin condensation and control of cell cycle. The chain is GTP-binding nuclear protein Ran1B (RAN1B) from Lotus japonicus (Lotus corniculatus var. japonicus).